Reading from the N-terminus, the 196-residue chain is Acyl-homoserine-lactone synthase (196 aa).

The protein belongs to the autoinducer synthase family.

The catalysed reaction is a fatty acyl-[ACP] + S-adenosyl-L-methionine = an N-acyl-L-homoserine lactone + S-methyl-5'-thioadenosine + holo-[ACP] + H(+). Functionally, required for the synthesis of a yet unknown N-aceyl-homoserine lactone (N-aceyl-HSL), an autoinducer molecule which binds to PhzR and thus regulates phenazine production. This Pseudomonas fluorescens protein is Acyl-homoserine-lactone synthase (phzI).